The chain runs to 148 residues: Large-conductance mechanosensitive channel (148 aa).

2 helical membrane passes run 16-36 and 89-109; these read VMDLAVGVIIGGAFSTIVNSI and GSFITVLINFLILAFIIFLMV.

The protein belongs to the MscL family. In terms of assembly, homopentamer.

Its subcellular location is the cell inner membrane. Channel that opens in response to stretch forces in the membrane lipid bilayer. May participate in the regulation of osmotic pressure changes within the cell. The protein is Large-conductance mechanosensitive channel of Paraburkholderia phytofirmans (strain DSM 17436 / LMG 22146 / PsJN) (Burkholderia phytofirmans).